The primary structure comprises 342 residues: tRNA-specific 2-thiouridylase MnmA 2 (342 aa).

C62 serves as the catalytic Nucleophile. C62 and C160 are oxidised to a cystine. G86 lines the ATP pocket. The segment at 110–112 is interaction with tRNA; sequence KDQ. The Cysteine persulfide intermediate role is filled by C160. Positions 268-269 are interaction with tRNA; sequence RY.

Belongs to the MnmA/TRMU family.

The protein localises to the cytoplasm. It catalyses the reaction S-sulfanyl-L-cysteinyl-[protein] + uridine(34) in tRNA + AH2 + ATP = 2-thiouridine(34) in tRNA + L-cysteinyl-[protein] + A + AMP + diphosphate + H(+). In terms of biological role, catalyzes the 2-thiolation of uridine at the wobble position (U34) of tRNA, leading to the formation of s(2)U34. The protein is tRNA-specific 2-thiouridylase MnmA 2 of Syntrophus aciditrophicus (strain SB).